Consider the following 195-residue polypeptide: NADH-quinone oxidoreductase subunit B (195 aa).

Residues Cys74, Cys75, Cys139, and Cys169 each contribute to the [4Fe-4S] cluster site.

The protein belongs to the complex I 20 kDa subunit family. NDH-1 is composed of 14 different subunits. Subunits NuoB, C, D, E, F, and G constitute the peripheral sector of the complex. [4Fe-4S] cluster is required as a cofactor.

The protein localises to the cell inner membrane. The enzyme catalyses a quinone + NADH + 5 H(+)(in) = a quinol + NAD(+) + 4 H(+)(out). Its function is as follows. NDH-1 shuttles electrons from NADH, via FMN and iron-sulfur (Fe-S) centers, to quinones in the respiratory chain. The immediate electron acceptor for the enzyme in this species is believed to be ubiquinone. Couples the redox reaction to proton translocation (for every two electrons transferred, four hydrogen ions are translocated across the cytoplasmic membrane), and thus conserves the redox energy in a proton gradient. The chain is NADH-quinone oxidoreductase subunit B from Methylobacterium sp. (strain 4-46).